The chain runs to 289 residues: Membrane protein insertase YidC (289 aa).

The first 19 residues, 1–19 (MKKKALLPLLLGIMVFLAG), serve as a signal peptide directing secretion. A lipid anchor (N-palmitoyl cysteine) is attached at Cys20. A lipid anchor (S-diacylglycerol cysteine) is attached at Cys20. The next 5 membrane-spanning stretches (helical) occupy residues 55 to 75 (YGLA…PFML), 133 to 153 (MLGC…FFVL), 177 to 197 (IWIT…STFS), 210 to 230 (MIIS…ALGL), and 231 to 251 (YWSV…AYYS). The segment at 268–289 (EHGGSGNSKGAKVVSKKNKKKK) is disordered.

It belongs to the OXA1/ALB3/YidC family. Type 2 subfamily.

It localises to the cell membrane. In terms of biological role, required for the insertion and/or proper folding and/or complex formation of integral membrane proteins into the membrane. Involved in integration of membrane proteins that insert both dependently and independently of the Sec translocase complex, as well as at least some lipoproteins. This chain is Membrane protein insertase YidC, found in Staphylococcus carnosus (strain TM300).